Consider the following 434-residue polypeptide: MAKTDLARRVYNHTWKLDPIIRSLLDTDFYKLLMLQMIWGLYPRVDATFSLINRTSSVRLADEIDEGELRAQLDHARTLRFSKKEMIWLAGNTFYGRKQIFQPEFLAWLHDCQLPEYELRRKDGQYELHFHGPWTHTTMWEIPALAIINELRSRAAMKNLGPFSLDVLYARAKAKMWSKVERLRQLPDLKISDFGTRRRHSFLWQRWCVEALKEGIGSAFTGTSNVLLAMDTDLEALGTNAHELPMVLAALAKTDDELRSAPYRVLQDWNRYYGGNLLIVLPDAFGTAAFLRNAPDWVADWTGFRPDSAPPIEGGERIIEWWKSKGKDPREKLLIFSDALDVDTIEETYRHFEGRVRMGFGWGTNLTNDFAGCAPQSIDGLKAISLVCKVTDANGHPAVKLSDNPQKATGDPKEVARYLRFFGNEERVEQLVRV.

Residue histidine 242 is modified to Phosphohistidine; by autocatalysis.

The protein belongs to the NAPRTase family. In terms of processing, transiently phosphorylated on a His residue during the reaction cycle. Phosphorylation strongly increases the affinity for substrates and increases the rate of nicotinate D-ribonucleotide production. Dephosphorylation regenerates the low-affinity form of the enzyme, leading to product release.

The catalysed reaction is nicotinate + 5-phospho-alpha-D-ribose 1-diphosphate + ATP + H2O = nicotinate beta-D-ribonucleotide + ADP + phosphate + diphosphate. It participates in cofactor biosynthesis; NAD(+) biosynthesis; nicotinate D-ribonucleotide from nicotinate: step 1/1. Functionally, catalyzes the synthesis of beta-nicotinate D-ribonucleotide from nicotinate and 5-phospho-D-ribose 1-phosphate at the expense of ATP. The polypeptide is Nicotinate phosphoribosyltransferase (Brucella melitensis biotype 1 (strain ATCC 23456 / CCUG 17765 / NCTC 10094 / 16M)).